The following is a 3421-amino-acid chain: Large tegument protein deneddylase (3421 aa).

The interval 1-248 (MAQTLVPANK…SETYLSDEQY (248 aa)) is deubiquitination activity. Residues 19-238 (VVIGYRNQYD…ISATSLLYGI (220 aa)) enclose the Peptidase C76 domain. Active-site residues include Cys-39, Asp-172, and His-174. The interval 311-351 (QPTEKRVSLPKRRRPPWTPPTSSENLTTSGNTHTVAGRPSQ) is disordered. The span at 332 to 344 (SSENLTTSGNTHT) shows a compositional bias: polar residues. Residues 482–508 (LEQFITMIFNRLLSFLVENGARTRTDS) form an interaction with inner tegument protein region. 2 disordered regions span residues 2407–2442 (ESNP…PTGI) and 2479–3195 (SNAM…RKNI). The segment covering 2415–2432 (SHDSSQSLDVPSSPSSGS) has biased composition (low complexity). Pro residues-rich tracts occupy residues 2506 to 2516 (TLPPKAAPLPP), 2541 to 2556 (PSVP…PPLP), 2565 to 2577 (GPPP…PPLP), 2586 to 2598 (GPPP…PPLP), and 2607 to 2619 (GPPP…PPLP). 2 stretches are compositionally biased toward polar residues: residues 2620–2637 (QSTS…SGKT) and 2778–2787 (SDSNVTQSTK). Over residues 2797–2857 (PAAAPAKSAA…SAAAPAAAPA (61 aa)) the composition is skewed to low complexity. Positions 2869–2895 (KPAKDQAKDQAKDQAKDQAKDQAKDQA) are enriched in basic and acidic residues. A compositionally biased stretch (polar residues) spans 2953 to 2969 (LSASKNSHTTDAVSSDR). 2 stretches are compositionally biased toward basic and acidic residues: residues 3023–3040 (RKSD…RRAF) and 3088–3097 (CSEEPKRPTG). Over residues 3120 to 3146 (IPQNQNTSESPRTTSLKSPTRTVQSSM) the composition is skewed to polar residues. Positions 3171–3188 (PQPPPANQTPPPQEPPAP) are enriched in pro residues.

Belongs to the herpesviridae large tegument protein family. As to quaternary structure, interacts with host CUL1 and CUL4A; these interactions inhibit the E3 ligase activity of cullins. Interacts with inner tegument protein. Interacts with capsid vertex specific component CVC2. Interacts with the major capsid protein/MCP.

The protein localises to the virion tegument. It is found in the host cytoplasm. The protein resides in the host nucleus. It catalyses the reaction Thiol-dependent hydrolysis of ester, thioester, amide, peptide and isopeptide bonds formed by the C-terminal Gly of ubiquitin (a 76-residue protein attached to proteins as an intracellular targeting signal).. Functionally, large tegument protein that plays multiple roles in the viral cycle. During viral entry, remains associated with the capsid while most of the tegument is detached and participates in the capsid transport toward the host nucleus. Plays a role in the routing of the capsid at the nuclear pore complex and subsequent uncoating. Within the host nucleus, acts as a deneddylase and promotes the degradation of nuclear CRLs (cullin-RING ubiquitin ligases) and thereby stabilizes nuclear CRL substrates, while cytoplasmic CRLs remain unaffected. These modifications prevent host cell cycle S-phase progression and create a favorable environment allowing efficient viral genome replication. Participates later in the secondary envelopment of capsids. Indeed, plays a linker role for the association of the outer viral tegument to the capsids together with the inner tegument protein. This chain is Large tegument protein deneddylase, found in Equus caballus (Horse).